The primary structure comprises 216 residues: Capsule polysaccharide export ATP-binding protein CtrD (216 aa).

In terms of domain architecture, ABC transporter spans 2–215; sequence ISVEHVSKRY…DKAYEYYNSL (214 aa). 38–45 lines the ATP pocket; sequence GRNGAGKS.

Belongs to the ABC transporter superfamily.

It is found in the cell inner membrane. The catalysed reaction is ATP + H2O + capsular polysaccharide-[capsular polysaccharide-binding protein]Side 1 = ADP + phosphate + capsular polysaccharideSide 2 + [capsular polysaccharide-binding protein]Side 1.. Functionally, putative ATP-binding protein, and an energy-coupling component of capsule polysaccharide export apparatus. The sequence is that of Capsule polysaccharide export ATP-binding protein CtrD (ctrD) from Neisseria meningitidis serogroup B (strain ATCC BAA-335 / MC58).